Reading from the N-terminus, the 488-residue chain is GTPase Der (488 aa).

EngA-type G domains follow at residues 3-166 (PVVA…AEAM) and 199-372 (IKLA…DSAT). Residues 9–16 (GRPNVGKS), 56–60 (DTGGI), 118–121 (NKVD), 205–212 (GKPNVGKS), 252–256 (DTAGV), and 317–320 (NKWD) contribute to the GTP site. Positions 373–457 (RRVSTSMLTR…PIQLRFQEGD (85 aa)) constitute a KH-like domain. Positions 460-488 (FENKTEKLTMSQERRRKRAQSHIKDRKTK) are disordered. Over residues 473–488 (RRRKRAQSHIKDRKTK) the composition is skewed to basic residues.

This sequence belongs to the TRAFAC class TrmE-Era-EngA-EngB-Septin-like GTPase superfamily. EngA (Der) GTPase family. Associates with the 50S ribosomal subunit.

GTPase that plays an essential role in the late steps of ribosome biogenesis. This Shewanella baltica (strain OS223) protein is GTPase Der.